Reading from the N-terminus, the 95-residue chain is Protein RnfH (95 aa).

It belongs to the UPF0125 (RnfH) family.

This chain is Protein RnfH, found in Methylococcus capsulatus (strain ATCC 33009 / NCIMB 11132 / Bath).